The primary structure comprises 506 residues: Tubby protein homolog (506 aa).

The interval 36–244 is disordered; it reads QKQKKKRQEP…PSPTAPEQPV (209 aa). 2 stretches are compositionally biased toward low complexity: residues 70–87 and 101–116; these read LVESYLSSSGSTSYQVQE and PTAPASAKRTKAAATA. Positions 196–206 are enriched in acidic residues; the sequence is FDEDEEDEEEN. Low complexity-rich tracts occupy residues 207–221 and 230–243; these read SSSSSQLNSNTRPSS and EAASAPSPTAPEQP.

It belongs to the TUB family. Interacts with GNAQ. Interacts with TULP1.

It localises to the cytoplasm. The protein resides in the nucleus. It is found in the secreted. Its subcellular location is the cell membrane. Its function is as follows. Functions in signal transduction from heterotrimeric G protein-coupled receptors. Binds to membranes containing phosphatidylinositol 4,5-bisphosphate. Can bind DNA (in vitro). May contribute to the regulation of transcription in the nucleus. Could be involved in the hypothalamic regulation of body weight. Contribute to stimulation of phagocytosis of apoptotic retinal pigment epithelium (RPE) cells and macrophages. This is Tubby protein homolog (TUB) from Homo sapiens (Human).